The sequence spans 73 residues: Putative membrane protein insertion efficiency factor (73 aa).

Belongs to the UPF0161 family.

It is found in the cell inner membrane. Could be involved in insertion of integral membrane proteins into the membrane. This is Putative membrane protein insertion efficiency factor from Phocaeicola vulgatus (strain ATCC 8482 / DSM 1447 / JCM 5826 / CCUG 4940 / NBRC 14291 / NCTC 11154) (Bacteroides vulgatus).